We begin with the raw amino-acid sequence, 682 residues long: DNA-directed RNA polymerase subunit beta' (682 aa).

Zn(2+)-binding residues include cysteine 69, cysteine 71, cysteine 87, and cysteine 90. Mg(2+) contacts are provided by aspartate 489, aspartate 491, and aspartate 493.

Belongs to the RNA polymerase beta' chain family. RpoC1 subfamily. As to quaternary structure, in plastids the minimal PEP RNA polymerase catalytic core is composed of four subunits: alpha, beta, beta', and beta''. When a (nuclear-encoded) sigma factor is associated with the core the holoenzyme is formed, which can initiate transcription. It depends on Mg(2+) as a cofactor. Zn(2+) serves as cofactor.

Its subcellular location is the plastid. The protein resides in the chloroplast. The catalysed reaction is RNA(n) + a ribonucleoside 5'-triphosphate = RNA(n+1) + diphosphate. Functionally, DNA-dependent RNA polymerase catalyzes the transcription of DNA into RNA using the four ribonucleoside triphosphates as substrates. This is DNA-directed RNA polymerase subunit beta' from Acorus calamus var. americanus (American sweet flag).